Consider the following 804-residue polypeptide: Elongation factor G, mitochondrial (804 aa).

The transit peptide at 1-63 (MSMHRVARAV…RHFFQSPIIR (63 aa)) directs the protein to the mitochondrion. One can recognise a tr-type G domain in the interval 99–385 (RRVRNIGIAA…AVCDYLPNPA (287 aa)). GTP is bound by residues 108–115 (AHIDSGKT), 183–187 (DTPGH), and 237–240 (NKMD).

The protein belongs to the TRAFAC class translation factor GTPase superfamily. Classic translation factor GTPase family. EF-G/EF-2 subfamily.

Its subcellular location is the mitochondrion. The protein operates within protein biosynthesis; polypeptide chain elongation. Mitochondrial GTPase that catalyzes the GTP-dependent ribosomal translocation step during translation elongation. During this step, the ribosome changes from the pre-translocational (PRE) to the post-translocational (POST) state as the newly formed A-site-bound peptidyl-tRNA and P-site-bound deacylated tRNA move to the P and E sites, respectively. Catalyzes the coordinated movement of the two tRNA molecules, the mRNA and conformational changes in the ribosome. The chain is Elongation factor G, mitochondrial (mef1) from Sclerotinia sclerotiorum (strain ATCC 18683 / 1980 / Ss-1) (White mold).